A 302-amino-acid chain; its full sequence is uncharacterized protein (302 aa).

10 helical membrane-spanning segments follow: residues 13-32 (GILL…IYFK), 42-64 (ILSH…GRRW), 77-96 (FWLL…IFIW), 106-125 (ASLG…MLFL), 132-150 (LQWF…QLVV), 154-171 (VPIV…YGLL), 183-202 (LFLE…IWLA), 217-239 (NLLL…GAAA), 246-265 (LGFF…VLVY), and 275-297 (ITFA…AGHA). An EamA domain is found at 22-149 (TMWGIAPIYF…AAIGVGIQLV (128 aa)).

This sequence belongs to the EamA transporter family.

It localises to the cell membrane. This is an uncharacterized protein from Vibrio cholerae serotype O1 (strain ATCC 39315 / El Tor Inaba N16961).